A 434-amino-acid polypeptide reads, in one-letter code: Methylenetetrahydrofolate--tRNA-(uracil-5-)-methyltransferase TrmFO (434 aa).

9–14 provides a ligand contact to FAD; it reads GAGLAG.

The protein belongs to the MnmG family. TrmFO subfamily. FAD is required as a cofactor.

It localises to the cytoplasm. The catalysed reaction is uridine(54) in tRNA + (6R)-5,10-methylene-5,6,7,8-tetrahydrofolate + NADH + H(+) = 5-methyluridine(54) in tRNA + (6S)-5,6,7,8-tetrahydrofolate + NAD(+). It catalyses the reaction uridine(54) in tRNA + (6R)-5,10-methylene-5,6,7,8-tetrahydrofolate + NADPH + H(+) = 5-methyluridine(54) in tRNA + (6S)-5,6,7,8-tetrahydrofolate + NADP(+). Catalyzes the folate-dependent formation of 5-methyl-uridine at position 54 (M-5-U54) in all tRNAs. The chain is Methylenetetrahydrofolate--tRNA-(uracil-5-)-methyltransferase TrmFO from Bacillus licheniformis (strain ATCC 14580 / DSM 13 / JCM 2505 / CCUG 7422 / NBRC 12200 / NCIMB 9375 / NCTC 10341 / NRRL NRS-1264 / Gibson 46).